The following is a 599-amino-acid chain: Zinc metalloproteinase dpy-31 (599 aa).

An N-terminal signal peptide occupies residues 1–22; that stretch reads MALLKPFLSRTFSSFFATITGG. A propeptide spanning residues 23–211 is cleaved from the precursor; it reads RNLIDSIEEL…IQHGRRTKRK (189 aa). Residues 211-410 enclose the Peptidase M12A domain; the sequence is KFIRSELRRW…IRLMNVIYCS (200 aa). Asparagine 251 carries an N-linked (GlcNAc...) asparagine glycan. Disulfide bonds link cysteine 254/cysteine 409, cysteine 277/cysteine 298, cysteine 413/cysteine 433, cysteine 435/cysteine 444, and cysteine 455/cysteine 483. Histidine 306 contacts Zn(2+). Glutamate 307 is a catalytic residue. Positions 310 and 316 each coordinate Zn(2+). The EGF-like domain maps to 405–445; it reads NVIYCSDSCAQKLPCQRGGYTDPRRCGRCRCPDGFTGKLCE. Residues 455 to 571 enclose the CUB domain; it reads CGGRIELTSS…KGFQAQVRAL (117 aa). N-linked (GlcNAc...) asparagine glycosylation is present at asparagine 522.

Zn(2+) is required as a cofactor.

It localises to the secreted. Inhibited by marimastat and tripeptide hydroxamic acids. In terms of biological role, metalloprotease which cleaves the carboxyl terminus of procollagens to mature collagens. Probably involved in cuticular collagen maturation. This is Zinc metalloproteinase dpy-31 from Brugia malayi (Filarial nematode worm).